The primary structure comprises 111 residues: Ferredoxin, 2Fe-2S (111 aa).

Residues C10, C23, C56, and C60 each contribute to the [2Fe-2S] cluster site.

Homodimer in solution. [2Fe-2S] cluster serves as cofactor.

Ferredoxins are iron-sulfur proteins that transfer electrons in a wide variety of metabolic reactions. In Aquifex aeolicus (strain VF5), this protein is Ferredoxin, 2Fe-2S (fdx4).